We begin with the raw amino-acid sequence, 273 residues long: Undecaprenyl-diphosphatase (273 aa).

Transmembrane regions (helical) follow at residues 6–26 (SLLI…LPVS), 45–65 (AKTF…VMFW), 90–110 (LTLI…LLFH), 116–136 (LFNP…LIAA), 190–210 (YAAS…ATAL), 222–242 (GDIP…LIAI), and 252–272 (ISFI…YVVF).

It belongs to the UppP family.

The protein resides in the cell inner membrane. The catalysed reaction is di-trans,octa-cis-undecaprenyl diphosphate + H2O = di-trans,octa-cis-undecaprenyl phosphate + phosphate + H(+). In terms of biological role, catalyzes the dephosphorylation of undecaprenyl diphosphate (UPP). Confers resistance to bacitracin. This Escherichia coli O157:H7 protein is Undecaprenyl-diphosphatase.